The following is a 278-amino-acid chain: Digeranylgeranylglyceryl phosphate synthase (278 aa).

A run of 7 helical transmembrane segments spans residues 12–32 (LKNCLTAGFGALISGLIASNF), 34–54 (FGALFPLILAFLVVFFICGFG), 92–112 (IMIFGLIISLFNIYCFLMAVL), 129–149 (IIGNMLVAYLTGSVFIFGGIA), 199–219 (IYISLGLLLIAIGLSFLPYLT), 221–241 (IFGIYYLLMILICNLMFLAGF), and 257–277 (SKNIKLITNFVLIAFIIGSIF).

The protein belongs to the UbiA prenyltransferase family. DGGGP synthase subfamily. Requires Mg(2+) as cofactor.

It localises to the cell membrane. The enzyme catalyses sn-3-O-(geranylgeranyl)glycerol 1-phosphate + (2E,6E,10E)-geranylgeranyl diphosphate = 2,3-bis-O-(geranylgeranyl)-sn-glycerol 1-phosphate + diphosphate. It functions in the pathway membrane lipid metabolism; glycerophospholipid metabolism. Prenyltransferase that catalyzes the transfer of the geranylgeranyl moiety of geranylgeranyl diphosphate (GGPP) to the C2 hydroxyl of (S)-3-O-geranylgeranylglyceryl phosphate (GGGP). This reaction is the second ether-bond-formation step in the biosynthesis of archaeal membrane lipids. This chain is Digeranylgeranylglyceryl phosphate synthase, found in Methanococcus vannielii (strain ATCC 35089 / DSM 1224 / JCM 13029 / OCM 148 / SB).